We begin with the raw amino-acid sequence, 731 residues long: 1,4-alpha-glucan branching enzyme GlgB (731 aa).

D412 serves as the catalytic Nucleophile. Catalysis depends on E465, which acts as the Proton donor.

This sequence belongs to the glycosyl hydrolase 13 family. GlgB subfamily. In terms of assembly, monomer.

The enzyme catalyses Transfers a segment of a (1-&gt;4)-alpha-D-glucan chain to a primary hydroxy group in a similar glucan chain.. It functions in the pathway glycan biosynthesis; glycogen biosynthesis. In terms of biological role, catalyzes the formation of the alpha-1,6-glucosidic linkages in glycogen by scission of a 1,4-alpha-linked oligosaccharide from growing alpha-1,4-glucan chains and the subsequent attachment of the oligosaccharide to the alpha-1,6 position. The protein is 1,4-alpha-glucan branching enzyme GlgB of Bordetella pertussis (strain Tohama I / ATCC BAA-589 / NCTC 13251).